The sequence spans 57 residues: Light-harvesting protein B-808/866 alpha chain (57 aa).

At Met1 the chain carries N-formylmethionine. Over 1-10 (MQPRSPVRTN) the chain is Cytoplasmic. A helical transmembrane segment spans residues 11–30 (IVIFTILGFVVALLIHFIVL). Position 26 (His26) interacts with a bacteriochlorophyll. At 31–57 (SSPEYNWLSNAEGGALLLSAARALFGI) the chain is on the periplasmic side.

It belongs to the antenna complex alpha subunit family. As to quaternary structure, the core complex is formed by different alpha and beta chains, binding bacteriochlorophyll molecules, and arranged most probably in tetrameric structures disposed around the reaction center. The non-pigmented gamma chains may constitute additional components.

The protein resides in the cell membrane. Its function is as follows. Antenna complexes are light-harvesting systems, which transfer the excitation energy to the reaction centers. The protein is Light-harvesting protein B-808/866 alpha chain (puf2A) of Chloroflexus aurantiacus (strain ATCC 29366 / DSM 635 / J-10-fl).